The chain runs to 33 residues: Protamine-1A (33 aa).

The interval 1–33 is disordered; that stretch reads PRRRRSSSRPVRRRRRPRRVSRRRRRRGGRRRR.

As to expression, testis.

The protein localises to the nucleus. The protein resides in the chromosome. In terms of biological role, protamines substitute for histones in the chromatin of sperm during the haploid phase of spermatogenesis. They compact sperm DNA into a highly condensed, stable and inactive complex. The sequence is that of Protamine-1A from Oncorhynchus mykiss (Rainbow trout).